The primary structure comprises 345 residues: Holliday junction branch migration complex subunit RuvB (345 aa).

A large ATPase domain (RuvB-L) region spans residues 1–182 (MQRLVEVESV…FGMHFRMQFY (182 aa)). ATP-binding positions include leucine 21, arginine 22, glycine 63, lysine 66, threonine 67, threonine 68, 129 to 131 (EDY), arginine 172, tyrosine 182, and arginine 219. Threonine 67 contacts Mg(2+). Residues 183–253 (TEIELAKIIQ…RCKYALDELG (71 aa)) are small ATPAse domain (RuvB-S). The head domain (RuvB-H) stretch occupies residues 256 to 345 (ESGFDEMDIN…EDDLTQGKLF (90 aa)). DNA contacts are provided by arginine 310 and arginine 315.

The protein belongs to the RuvB family. In terms of assembly, homohexamer. Forms an RuvA(8)-RuvB(12)-Holliday junction (HJ) complex. HJ DNA is sandwiched between 2 RuvA tetramers; dsDNA enters through RuvA and exits via RuvB. An RuvB hexamer assembles on each DNA strand where it exits the tetramer. Each RuvB hexamer is contacted by two RuvA subunits (via domain III) on 2 adjacent RuvB subunits; this complex drives branch migration. In the full resolvosome a probable DNA-RuvA(4)-RuvB(12)-RuvC(2) complex forms which resolves the HJ.

It is found in the cytoplasm. The catalysed reaction is ATP + H2O = ADP + phosphate + H(+). Its function is as follows. The RuvA-RuvB-RuvC complex processes Holliday junction (HJ) DNA during genetic recombination and DNA repair, while the RuvA-RuvB complex plays an important role in the rescue of blocked DNA replication forks via replication fork reversal (RFR). RuvA specifically binds to HJ cruciform DNA, conferring on it an open structure. The RuvB hexamer acts as an ATP-dependent pump, pulling dsDNA into and through the RuvAB complex. RuvB forms 2 homohexamers on either side of HJ DNA bound by 1 or 2 RuvA tetramers; 4 subunits per hexamer contact DNA at a time. Coordinated motions by a converter formed by DNA-disengaged RuvB subunits stimulates ATP hydrolysis and nucleotide exchange. Immobilization of the converter enables RuvB to convert the ATP-contained energy into a lever motion, pulling 2 nucleotides of DNA out of the RuvA tetramer per ATP hydrolyzed, thus driving DNA branch migration. The RuvB motors rotate together with the DNA substrate, which together with the progressing nucleotide cycle form the mechanistic basis for DNA recombination by continuous HJ branch migration. Branch migration allows RuvC to scan DNA until it finds its consensus sequence, where it cleaves and resolves cruciform DNA. This Aliarcobacter butzleri (strain RM4018) (Arcobacter butzleri) protein is Holliday junction branch migration complex subunit RuvB.